The chain runs to 243 residues: Sarcospan (243 aa).

The disordered stretch occupies residues 1–43; sequence MGKNKQPRGQQRQGGPPAADAAGPDDMEPKKGTGAPKECGEEE. The Cytoplasmic segment spans residues 1 to 53; it reads MGKNKQPRGQQRQGGPPAADAAGPDDMEPKKGTGAPKECGEEEPRTCCGCRFP. Over residues 7–24 the composition is skewed to low complexity; it reads PRGQQRQGGPPAADAAGP. Residues 54–74 form a helical membrane-spanning segment; sequence LLLALLQLALGIAVTVVGFLM. The Extracellular portion of the chain corresponds to 75–86; sequence ASISSSLLVRDT. The helical transmembrane segment at 87–107 threads the bilayer; sequence PFWAGIIVCLVAYLGLFMLCV. At 108–122 the chain is on the cytoplasmic side; sequence SYQVDERTCIQFSMK. The helical transmembrane segment at 123–143 threads the bilayer; it reads LLYFLLSALGLTVCVLAVAFA. The Extracellular portion of the chain corresponds to 144–193; it reads AHHYSQLTQFTCETTLDSCQCKLPSSEPLSRTFVYRDVTDCTSVTGTFKL. A helical membrane pass occupies residues 194–214; it reads FLLIQMILNLVCGLVCLLACF. The Cytoplasmic segment spans residues 215–243; it reads VMWKHRYQVFYVGVRICSLTASEGPQQKI.

Isoform 1 is expressed exclusively in heart and skeletal muscle. Isoform 2 is expressed in heart, skeletal muscle, thymus, prostate, testis, ovary, small intestine, colon and spleen.

Its subcellular location is the cell membrane. The protein resides in the sarcolemma. It is found in the postsynaptic cell membrane. Component of the dystrophin-glycoprotein complex (DGC), a complex that spans the muscle plasma membrane and forms a link between the F-actin cytoskeleton and the extracellular matrix. Preferentially associates with the sarcoglycan subcomplex of the DGC. In Homo sapiens (Human), this protein is Sarcospan (SSPN).